A 91-amino-acid chain; its full sequence is Alpha-defensin-related sequence 10 (91 aa).

The N-terminal stretch at 1-19 (MKKLVLLSAFVLLAFQVQA) is a signal peptide. Residues 20–65 (DSIQNTDEETKTEEQPGEENQAMSVSFGDPEGSALQDAAVGMARPC) constitute a propeptide that is removed on maturation. Residues 21 to 52 (SIQNTDEETKTEEQPGEENQAMSVSFGDPEGS) are disordered. 7 tandem repeats follow at residues 65–67 (CPP), 68–70 (CPS), 71–73 (CPS), 74–76 (CPW), 77–79 (CPM), 80–82 (CPR), and 83–85 (CPS). The 7 X 3 AA tandem repeats of C-P-X stretch occupies residues 65 to 85 (CPPCPSCPSCPWCPMCPRCPS).

It belongs to the alpha-defensin family. In terms of tissue distribution, paneth cells of the small bowel.

It localises to the secreted. Functionally, apparent precursor of a secreted, cationic, proline- and cysteine-rich peptide that contains Cys-Pro-Xaa repeats. Unlike cryptdin, the proposed mature peptide region lacks the structural motif characteristic of defensins. It may have microbicidal activities. The protein is Alpha-defensin-related sequence 10 (Defa-rs10) of Mus musculus (Mouse).